A 616-amino-acid chain; its full sequence is Dihydroxy-acid dehydratase (616 aa).

D81 provides a ligand contact to Mg(2+). Residue C122 coordinates [2Fe-2S] cluster. Mg(2+) is bound by residues D123 and K124. At K124 the chain carries N6-carboxylysine. Position 195 (C195) interacts with [2Fe-2S] cluster. E491 lines the Mg(2+) pocket. Catalysis depends on S517, which acts as the Proton acceptor.

The protein belongs to the IlvD/Edd family. In terms of assembly, homodimer. It depends on [2Fe-2S] cluster as a cofactor. Mg(2+) serves as cofactor.

The catalysed reaction is (2R)-2,3-dihydroxy-3-methylbutanoate = 3-methyl-2-oxobutanoate + H2O. It carries out the reaction (2R,3R)-2,3-dihydroxy-3-methylpentanoate = (S)-3-methyl-2-oxopentanoate + H2O. Its pathway is amino-acid biosynthesis; L-isoleucine biosynthesis; L-isoleucine from 2-oxobutanoate: step 3/4. It participates in amino-acid biosynthesis; L-valine biosynthesis; L-valine from pyruvate: step 3/4. In terms of biological role, functions in the biosynthesis of branched-chain amino acids. Catalyzes the dehydration of (2R,3R)-2,3-dihydroxy-3-methylpentanoate (2,3-dihydroxy-3-methylvalerate) into 2-oxo-3-methylpentanoate (2-oxo-3-methylvalerate) and of (2R)-2,3-dihydroxy-3-methylbutanoate (2,3-dihydroxyisovalerate) into 2-oxo-3-methylbutanoate (2-oxoisovalerate), the penultimate precursor to L-isoleucine and L-valine, respectively. This Serratia proteamaculans (strain 568) protein is Dihydroxy-acid dehydratase.